A 372-amino-acid chain; its full sequence is 3-ketodihydrosphingosine reductase TSC10 (372 aa).

Valine 64 is an NADP(+) binding site. 7 residues coordinate NADPH: glycine 67, serine 69, glycine 71, arginine 92, lysine 96, aspartate 123, and leucine 124. The GXSXG signature appears at 67–71 (GGSQG). Residue aspartate 123 coordinates NADP(+). Serine 205 (proton donor) is an active-site residue. Residues tyrosine 219, lysine 223, and serine 254 each contribute to the NADP(+) site. The Proton acceptor role is filled by tyrosine 219. The active-site Lowers pKa of active site Tyr is lysine 223. Residues 321–341 (LLQIPLAIFMCIFSPVWNAFV) traverse the membrane as a helical segment.

This sequence belongs to the short-chain dehydrogenases/reductases (SDR) family.

It is found in the endoplasmic reticulum membrane. It carries out the reaction sphinganine + NADP(+) = 3-oxosphinganine + NADPH + H(+). It participates in lipid metabolism; sphingolipid metabolism. Catalyzes the reduction of 3'-oxosphinganine (3-ketodihydrosphingosine/KDS) to sphinganine (dihydrosphingosine/DHS), the second step of de novo sphingolipid biosynthesis. This chain is 3-ketodihydrosphingosine reductase TSC10 (TSC10), found in Yarrowia lipolytica (strain CLIB 122 / E 150) (Yeast).